The following is a 622-amino-acid chain: Auxin efflux carrier component 1 (622 aa).

At 1 to 6 (MITAAD) the chain is on the extracellular side. A helical membrane pass occupies residues 7–27 (FYHVMTAMVPLYVAMILAYGS). At 28 to 44 (VKWWKIFTPDQCSGINR) the chain is on the cytoplasmic side. A helical transmembrane segment spans residues 45-65 (FVALFAVPLLSFHFIAANNPY). Residue Val-51 coordinates (indol-3-yl)acetate. The Extracellular segment spans residues 66 to 70 (AMNLR). The helical transmembrane segment at 71-91 (FLAADSLQKVIVLSLLFLWCK) threads the bilayer. Residues 92–100 (LSRNGSLDW) lie on the Cytoplasmic side of the membrane. Residues 101 to 121 (TITLFSLSTLPNTLVMGIPLL) form a helical membrane-spanning segment. (indol-3-yl)acetate is bound by residues Asn-112 and Leu-114. Over 122 to 131 (KGMYGNFSGD) the chain is Extracellular. Asn-127 carries an N-linked (GlcNAc...) asparagine glycan. The helical transmembrane segment at 132–152 (LMVQIVVLQCIIWYTLMLFLF) threads the bilayer. Tyr-145 contributes to the (indol-3-yl)acetate binding site. Over 153 to 482 (EYRGAKLLIS…LIRNPNSYSS (330 aa)) the chain is Cytoplasmic. Ser-209, Ser-212, Ser-221, and Ser-225 each carry phosphoserine. A disordered region spans residues 213–233 (RSDIYSRRSQGLSATPRPSNL). Residue Thr-227 is modified to Phosphothreonine. Ser-231 carries the phosphoserine modification. Thr-248 bears the Phosphothreonine mark. Phosphoserine occurs at positions 252, 253, and 271. The tract at residues 268-362 (GRNSNFGPGE…PVVGGKRQDG (95 aa)) is disordered. Thr-286 carries the post-translational modification Phosphothreonine. The residue at position 290 (Ser-290) is a Phosphoserine. The span at 298 to 311 (PAKPTAAGTAAGAG) shows a compositional bias: low complexity. At Thr-302 the chain carries Phosphothreonine. 3 positions are modified to phosphoserine: Ser-317, Ser-320, and Ser-337. Thr-340 is modified (phosphothreonine). Residues Ser-374, Ser-377, Ser-408, Ser-414, Ser-426, Ser-434, and Ser-446 each carry the phosphoserine modification. Residues 483–503 (LFGITWSLISFKWNIEMPALI) form a helical membrane-spanning segment. Residues 504–506 (AKS) are Extracellular-facing. Residues 507 to 527 (ISILSDAGLGMAMFSLGLFMA) traverse the membrane as a helical segment. Residues 528-541 (LNPRIIACGNRRAA) lie on the Cytoplasmic side of the membrane. A helical membrane pass occupies residues 542-562 (FAAAMRFVVGPAVMLVASYAV). At 563–566 (GLRG) the chain is on the extracellular side. Residues 567–587 (VLLHVAIIQAALPQGIVPFVF) form a helical membrane-spanning segment. (indol-3-yl)acetate contacts are provided by Ile-582 and Val-583. The Cytoplasmic segment spans residues 588 to 601 (AKEYNVHPDILSTA). The chain crosses the membrane as a helical span at residues 602-622 (VIFGMLIALPITLLYYILLGL).

It belongs to the auxin efflux carrier (TC 2.A.69.1) family. Homodimer. Interacts with TOPP4. Interacts with FYPP1 and FYPP3. Component of a complex made of PINs (e.g. PIN1 and PIN2), MAB4/MELs (e.g. NPY1/MAB4 and NPY5/MEL1) and AGC kinases (e.g. D6PK and PID) at the plasma membrane. Binds directly to NPY5/MEL1. In terms of tissue distribution, expressed at the basal side of elongated parenchymatous xylem cells.

The protein localises to the cell membrane. Auxin efflux carrier activity is competitively inhibited by naptalamate (N-1-naphthylphthalamic acid, NPA) but activated by D6PK-mediated phosphorylation. Functionally, acts as a component of the auxin efflux carrier; this activity is enhanced when activated by D6PK-mediated phosphorylation. Binds auxins including indole-3-acetic acid (IAA), indole-3-butyric acid (IBA), indole-3-propionic acid (IPA) and 4-chloroindole-3-acetic acid (4-Cl-IAA). Seems to be involved in the basipetal auxin transport. Mediates the formation of auxin gradient which is required to ensure correct organogenesis. Coordinated polar localization of PIN1 is directly regulated by the vesicle trafficking process and apical-basal PIN1 polarity also depends on the phosphorylation of conserved serine residues by PID kinase. The ARF-GEF protein GNOM is required for the correct recycling of PIN1 between the plasma membrane and endosomal compartments. Recrutes NPY proteins (e.g. NPY1/MAB4 and NPY5/MEL1) to the plasma membrane in a polar basal localization in root epidermis; this activity is optimized by AGC kinases-mediated (e.g. D6PK and PID) phosphorylation that limits their lateral diffusion-based escape. This Arabidopsis thaliana (Mouse-ear cress) protein is Auxin efflux carrier component 1.